We begin with the raw amino-acid sequence, 104 residues long: Large ribosomal subunit protein uL24 (104 aa).

It belongs to the universal ribosomal protein uL24 family. As to quaternary structure, part of the 50S ribosomal subunit.

Functionally, one of two assembly initiator proteins, it binds directly to the 5'-end of the 23S rRNA, where it nucleates assembly of the 50S subunit. Its function is as follows. One of the proteins that surrounds the polypeptide exit tunnel on the outside of the subunit. This chain is Large ribosomal subunit protein uL24, found in Proteus mirabilis (strain HI4320).